The following is a 287-amino-acid chain: Acetylglutamate kinase (287 aa).

Substrate contacts are provided by residues G70–G71, R92, and N184.

It belongs to the acetylglutamate kinase family. ArgB subfamily.

It localises to the cytoplasm. It carries out the reaction N-acetyl-L-glutamate + ATP = N-acetyl-L-glutamyl 5-phosphate + ADP. Its pathway is amino-acid biosynthesis; L-arginine biosynthesis; N(2)-acetyl-L-ornithine from L-glutamate: step 2/4. In terms of biological role, catalyzes the ATP-dependent phosphorylation of N-acetyl-L-glutamate. The polypeptide is Acetylglutamate kinase (Dinoroseobacter shibae (strain DSM 16493 / NCIMB 14021 / DFL 12)).